The chain runs to 237 residues: Sugar fermentation stimulation protein homolog (237 aa).

Belongs to the SfsA family.

The protein is Sugar fermentation stimulation protein homolog of Actinobacillus pleuropneumoniae serotype 5b (strain L20).